Reading from the N-terminus, the 421-residue chain is Gamma-glutamyl phosphate reductase (421 aa).

This sequence belongs to the gamma-glutamyl phosphate reductase family.

The protein localises to the cytoplasm. The catalysed reaction is L-glutamate 5-semialdehyde + phosphate + NADP(+) = L-glutamyl 5-phosphate + NADPH + H(+). Its pathway is amino-acid biosynthesis; L-proline biosynthesis; L-glutamate 5-semialdehyde from L-glutamate: step 2/2. Functionally, catalyzes the NADPH-dependent reduction of L-glutamate 5-phosphate into L-glutamate 5-semialdehyde and phosphate. The product spontaneously undergoes cyclization to form 1-pyrroline-5-carboxylate. This Stutzerimonas stutzeri (strain A1501) (Pseudomonas stutzeri) protein is Gamma-glutamyl phosphate reductase.